Consider the following 342-residue polypeptide: 29 kDa ribonucleoprotein, chloroplastic (342 aa).

Residues 1–65 (MSASASSLSA…PAEYPSRFVR (65 aa)) constitute a chloroplast transit peptide. An RRM 1 domain is found at 99-177 (LKLFVGNLSF…RPLRVNAGPP (79 aa)). Residues Ser-107 and Ser-204 each carry the phosphoserine modification. The interval 167 to 255 (GRPLRVNAGP…GSGSGSGSGS (89 aa)) is disordered. Positions 178-256 (PPKREESFSR…SGSGSGSGSG (79 aa)) are linker (Gly-rich). Gly residues-rich tracts occupy residues 190 to 237 (RSGG…GYGG) and 245 to 255 (SGSGSGSGSGS). In terms of domain architecture, RRM 2 spans 257 to 335 (NRLYVGNLSW…RQIRVSEAEA (79 aa)).

The protein localises to the plastid. Its subcellular location is the chloroplast. In terms of biological role, stabilizes specific chloroplast mRNAs. Required for normal chloroplast development under cold stress conditions by stabilizing transcripts of numerous mRNAs under these conditions. The polypeptide is 29 kDa ribonucleoprotein, chloroplastic (Arabidopsis thaliana (Mouse-ear cress)).